A 104-amino-acid chain; its full sequence is L-rhamnose mutarotase (104 aa).

Residue tyrosine 18 participates in substrate binding. The active-site Proton donor is histidine 22. Residues tyrosine 41 and 76-77 each bind substrate; that span reads WW.

It belongs to the rhamnose mutarotase family. As to quaternary structure, homodimer.

Its subcellular location is the cytoplasm. It carries out the reaction alpha-L-rhamnose = beta-L-rhamnose. It participates in carbohydrate metabolism; L-rhamnose metabolism. Its function is as follows. Involved in the anomeric conversion of L-rhamnose. In Tolumonas auensis (strain DSM 9187 / NBRC 110442 / TA 4), this protein is L-rhamnose mutarotase.